A 62-amino-acid chain; its full sequence is uncharacterized protein (62 aa).

Residues 38–62 form a disordered region; it reads VKSESDTADSKRSAEAKADEAPAKM.

This is an uncharacterized protein from Schizosaccharomyces pombe (strain 972 / ATCC 24843) (Fission yeast).